The sequence spans 289 residues: Fatty acid elongase 1 (289 aa).

Transmembrane regions (helical) follow at residues V22 to A42, A72 to T92, F123 to V143, F152 to G172, I177 to A197, W208 to L228, and L251 to L271. Positions H154 to H158 match the HxxHH motif motif. H157 functions as the Nucleophile in the catalytic mechanism. The N-linked (GlcNAc...) asparagine glycan is linked to N282.

This sequence belongs to the ELO family.

Its subcellular location is the endoplasmic reticulum membrane. The catalysed reaction is an acyl-CoA + malonyl-CoA + H(+) = a 3-oxoacyl-CoA + CO2 + CoA. It participates in lipid metabolism; fatty acid biosynthesis. In terms of biological role, involved in the synthesis of fatty acids. Elongates C4 fatty acids. Required for the normal mitochondrial function, energy metabolism and growth of epimastigotes. This chain is Fatty acid elongase 1, found in Trypanosoma cruzi (strain CL Brener).